A 136-amino-acid polypeptide reads, in one-letter code: Protein NrdI (136 aa).

It belongs to the NrdI family.

In terms of biological role, probably involved in ribonucleotide reductase function. The polypeptide is Protein NrdI (Shigella dysenteriae serotype 1 (strain Sd197)).